The sequence spans 216 residues: GTP-binding nuclear protein Ran, testis-specific isoform (216 aa).

Ala-2 is modified (N-acetylalanine). Residues 7–171 (PQIQFKLVLV…FWLARKLIGD (165 aa)) enclose the Small GTPase Ran-type domain. 17–24 (GDGGTGKT) lines the GTP pocket. Thr-24 bears the Phosphothreonine mark. Residues 37-45 (KEYVATLGV) form a switch-I region. N6-acetyllysine is present on Lys-60. 65 to 69 (DTAGQ) is a binding site for GTP. Residues 68-84 (GQEKFGGLRDGYYIQAQ) form a switch-II region. Lys-71 bears the N6-acetyllysine; alternate mark. Lys-71 is covalently cross-linked (Glycyl lysine isopeptide (Lys-Gly) (interchain with G-Cter in SUMO2); alternate). Lys-71 participates in a covalent cross-link: Glycyl lysine isopeptide (Lys-Gly) (interchain with G-Cter in ubiquitin); alternate. Lys-99 is modified (N6-acetyllysine). GTP is bound at residue 122–125 (NKVD). Lys-134 carries the post-translational modification N6-acetyllysine. Residue Lys-152 forms a Glycyl lysine isopeptide (Lys-Gly) (interchain with G-Cter in SUMO2) linkage. Lys-159 carries the N6-acetyllysine; alternate modification. Lys-159 carries the post-translational modification N6-succinyllysine; alternate.

This sequence belongs to the small GTPase superfamily. Ran family. In terms of tissue distribution, testis specific.

The protein localises to the nucleus. The enzyme catalyses GTP + H2O = GDP + phosphate + H(+). Functionally, GTP-binding protein involved in nucleocytoplasmic transport. Required for the import of protein into the nucleus and also for RNA export. Involved in chromatin condensation and control of cell cycle. This Rattus norvegicus (Rat) protein is GTP-binding nuclear protein Ran, testis-specific isoform (Rasl2-9).